The following is a 208-amino-acid chain: Urease accessory protein UreE (208 aa).

The interval 145-195 is disordered; it reads AEAHGHGQAHAHDHHDHDHHDHGHDHAHHDHAHHDHAHDHHGHDHAHDHAH.

This sequence belongs to the UreE family.

The protein resides in the cytoplasm. Involved in urease metallocenter assembly. Binds nickel. Probably functions as a nickel donor during metallocenter assembly. The chain is Urease accessory protein UreE from Azorhizobium caulinodans (strain ATCC 43989 / DSM 5975 / JCM 20966 / LMG 6465 / NBRC 14845 / NCIMB 13405 / ORS 571).